Reading from the N-terminus, the 387-residue chain is 3-ketoacyl-CoA thiolase (387 aa).

Cys-91 (acyl-thioester intermediate) is an active-site residue. Active-site proton acceptor residues include His-343 and Cys-373.

It belongs to the thiolase-like superfamily. Thiolase family. Heterotetramer of two alpha chains (FadB) and two beta chains (FadA).

It localises to the cytoplasm. It carries out the reaction an acyl-CoA + acetyl-CoA = a 3-oxoacyl-CoA + CoA. It functions in the pathway lipid metabolism; fatty acid beta-oxidation. Functionally, catalyzes the final step of fatty acid oxidation in which acetyl-CoA is released and the CoA ester of a fatty acid two carbons shorter is formed. The sequence is that of 3-ketoacyl-CoA thiolase from Shewanella frigidimarina (strain NCIMB 400).